Reading from the N-terminus, the 1399-residue chain is DNA-directed RNA polymerase subunit beta' (1399 aa).

The Zn(2+) site is built by Cys-71, Cys-73, Cys-86, and Cys-89. 3 residues coordinate Mg(2+): Asp-462, Asp-464, and Asp-466. Zn(2+)-binding residues include Cys-810, Cys-884, Cys-891, and Cys-894. The tract at residues 1379–1399 (KQAAIVPSQPEPQPLALPPAE) is disordered. Pro residues predominate over residues 1387-1399 (QPEPQPLALPPAE).

The protein belongs to the RNA polymerase beta' chain family. The RNAP catalytic core consists of 2 alpha, 1 beta, 1 beta' and 1 omega subunit. When a sigma factor is associated with the core the holoenzyme is formed, which can initiate transcription. Requires Mg(2+) as cofactor. The cofactor is Zn(2+).

It carries out the reaction RNA(n) + a ribonucleoside 5'-triphosphate = RNA(n+1) + diphosphate. DNA-dependent RNA polymerase catalyzes the transcription of DNA into RNA using the four ribonucleoside triphosphates as substrates. This Bradyrhizobium sp. (strain BTAi1 / ATCC BAA-1182) protein is DNA-directed RNA polymerase subunit beta'.